The chain runs to 410 residues: Magnesium transporter NIPA3 (410 aa).

Residues 1-67 (MGAQVRLPPG…ISANVENKYS (67 aa)) are Extracellular-facing. N-linked (GlcNAc...) asparagine glycans are attached at residues asparagine 25, asparagine 35, asparagine 50, and asparagine 55. A helical transmembrane segment spans residues 68–88 (LYVGLVLAVSSSIFIGSSFIL). Residues 89-114 (KKKGLLQLASKGFTRAGQGGHSYLKE) lie on the Cytoplasmic side of the membrane. Residues 115–135 (WLWWVGLLSMGAGEAANFAAY) traverse the membrane as a helical segment. Alanine 136 is a topological domain (extracellular). The chain crosses the membrane as a helical span at residues 137–157 (FAPATLVTPLGALSVLISAIL). Residues 158–165 (SSYFLNEH) lie on the Cytoplasmic side of the membrane. A helical membrane pass occupies residues 166 to 186 (LNIHGKIGCILSILGSTVMVI). Residues 187-207 (HAPQEEEVTSLHEMEMKLRDP) are Extracellular-facing. The chain crosses the membrane as a helical span at residues 208 to 228 (GFISFAVIITVISLVLILIVA). Residues 229 to 233 (PKKGQ) lie on the Cytoplasmic side of the membrane. A helical membrane pass occupies residues 234 to 254 (TNILVYISICSLIGAFSVSSV). At 255–273 (KGLGIAIKELIEWKPVYKH) the chain is on the extracellular side. The helical transmembrane segment at 274-294 (PLVFVLLAVLVLSVTTQINYL) threads the bilayer. The Cytoplasmic segment spans residues 295–305 (NKALDTFNTSL). The helical transmembrane segment at 306–326 (VTPIYYVFFTSMVVTCSAILF) threads the bilayer. Over 327-336 (QEWYGMTAGD) the chain is Extracellular. Residues 337–357 (IIGTLSGFFTIIIGIFLLHAF) traverse the membrane as a helical segment. Over 358–410 (KNTDITWSELTSTAKKEAVSLNVNENNYVLLENLECSAPGYNDDVTLFSRTDD) the chain is Cytoplasmic.

The protein belongs to the NIPA family. As to expression, expressed in the pancreatic islets.

Its subcellular location is the golgi apparatus membrane. The enzyme catalyses Mg(2+)(in) = Mg(2+)(out). Its function is as follows. Acts as a Mg(2+) transporter. Can also transport other divalent cations such as Fe(2+), Sr(2+), Ba(2+), Mn(2+), Cu(2+) and Co(2+) but to a much less extent than Mg(2+). This is Magnesium transporter NIPA3 (NIPAL1) from Homo sapiens (Human).